A 321-amino-acid chain; its full sequence is MIEAGIIGGAGYTAGELIRILLHHPEVNLNFVYSTSQLGKSLYSIHQDLIGDTEIEFTSKINKEADVVFLCLGHGNSKRFLSENKFSEKTKIVDLSTDFRMKANDHSFVYGMPELNQEEIKNANFIANPGCFATAITFAVLPLAKNGLLNDDVHVNAVTGATGAGTSLSATTHFTWRDNNFSAYKSFEHQHLQEIGQSFKQLQSDHTSEINFIPNRGNFSRGIHATAYTKFSGELEDAKKLYSEFYKDAAFTFLTDEELHLKQVVNTNKCLLRLQKFGNKLLITSVIDNLLKGASGQAVQNMNLMFGLEEKMGLNLKAGYF.

Cysteine 131 is a catalytic residue.

It belongs to the NAGSA dehydrogenase family. Type 1 subfamily.

It localises to the cytoplasm. The enzyme catalyses N-acetyl-L-glutamate 5-semialdehyde + phosphate + NADP(+) = N-acetyl-L-glutamyl 5-phosphate + NADPH + H(+). Its pathway is amino-acid biosynthesis; L-arginine biosynthesis; N(2)-acetyl-L-ornithine from L-glutamate: step 3/4. Catalyzes the NADPH-dependent reduction of N-acetyl-5-glutamyl phosphate to yield N-acetyl-L-glutamate 5-semialdehyde. This Christiangramia forsetii (strain DSM 17595 / CGMCC 1.15422 / KT0803) (Gramella forsetii) protein is N-acetyl-gamma-glutamyl-phosphate reductase.